The sequence spans 293 residues: Taste receptor type 2 member 143 (293 aa).

Topologically, residues 1–6 (MPSTPT) are extracellular. Residues 7-27 (LIFIIIFYLVSLASMLQNGFM) traverse the membrane as a helical segment. Over 28-55 (MIVLGREWMRNRTLPAADMIVASLASSR) the chain is Cytoplasmic. Residues 56–76 (FCLHGIAILANLLASFDFCYQ) form a helical membrane-spanning segment. Residues 77–79 (ANL) lie on the Extracellular side of the membrane. A helical transmembrane segment spans residues 80–100 (IGILWDFTNTLIFWLTAWLAI). Residues 101 to 127 (FYCVKISSFSHPVLFWLKWRISQLVPR) are Cytoplasmic-facing. Residues 128–148 (LLVVSLIIGGLSAVISATGNF) traverse the membrane as a helical segment. The Extracellular portion of the chain corresponds to 149–181 (MANQMTISQGFHGNCTFGHMSLDFYRYYYLYHS). The N-linked (GlcNAc...) asparagine glycan is linked to asparagine 162. The helical transmembrane segment at 182 to 202 (VLMWFTPFFLFLVSVIVLMFS) threads the bilayer. The Cytoplasmic portion of the chain corresponds to 203 to 227 (LYQHVEKMRGHRPGPWDLHTQAHTM). A helical transmembrane segment spans residues 228–248 (ALKSLTFFFIFYIFFFLALVI). The Extracellular portion of the chain corresponds to 249 to 264 (SSTKRKSMQSYYWARE). A helical transmembrane segment spans residues 265 to 285 (AIIYTGIFLNSIILLFSNPKL). Residues 286-293 (RKALKMRF) lie on the Cytoplasmic side of the membrane.

The protein belongs to the G-protein coupled receptor T2R family.

The protein localises to the membrane. Functionally, putative taste receptor which may play a role in the perception of bitterness. In Mus musculus (Mouse), this protein is Taste receptor type 2 member 143 (Tas2r143).